The sequence spans 694 residues: MSTDIAIKVDADHLRRDAFLYVRQSSLRQVFENTESTKRQYALRDRAVALGWPIERVHVIDSDLGLSGAQSQDRDGFQHLVSEVAMGHAGIVLGLEVSRLARNNADWHRLLELAALSRTLIMDEDGVYDPAYFNDRMLLGLKGTMSEAELHILKSRLQGGILNKARRGELEMPLPIGLVYTPDARVVLDPDRQIQDTVRLLFDTFRQTGSACAVVRRLRGEKILFPRRIRRGIGKGDVLWNEIDHSRVLQILHNPRYAGAFAYGRTRTAYNAKLKPVQLRVARSDWQVLIPDAHDGYISWAEYERNQAALEQNATGFSPGLRGRMPRQGSGLLQGRLLCGRCGARMRVHYEPFEGRLRPYYVCNEAVVRHAGKHCQWVRGAPVDEAVSALLLEVMAPAAIDVALAVQQEITQRVEQAAALRGTQLQRARYEAELARRRYLKVDPDNRLVADALEADWNARLRDLDALQREHERQNEADHSLLDEPAQQRIRALTADFPRIWNDERTGAVERKRMLGLLIEDVTLLVDDEVNINIRWRGGRTQSLSVARPRPMSVIRKTPAQVVALINELLEATNDRQIAARLNELGHRNWRGEPFTPKKVMLVRRTYGLKSRYERLREGGMLTGEEVAQQLGVCESTVHQLGRKGTLKRHRYASNHRYLYEPPGNVRLEKGAGSRYGGRQPRLIVAQPLQQGAS.

One can recognise a Resolvase/invertase-type recombinase catalytic domain in the interval Asp17–Gly168. Ser25 acts as the O-(5'-phospho-DNA)-serine intermediate in catalysis. Residues Pro175–Gly316 constitute a DNA-binding region (recombinase). A helical membrane pass occupies residues Ala386–Val406.

The protein resides in the membrane. This is an uncharacterized protein from Sinorhizobium fredii (strain NBRC 101917 / NGR234).